The primary structure comprises 440 residues: FAD-dependent monooxygenase FVEG_08293 (440 aa).

Residues 7–26 (EFNVAIVGAGVAGLALAMAL) traverse the membrane as a helical segment. Positions 37 and 50 each coordinate FAD. N-linked (GlcNAc...) asparagine glycosylation is present at N77. Residue R122 coordinates FAD. Active-site residues include R203 and Y235. Positions 317 and 330 each coordinate FAD.

This sequence belongs to the paxM FAD-dependent monooxygenase family. FAD serves as cofactor.

It localises to the membrane. FAD-dependent monooxygenase; part of the Fusarium detoxification of benzoxazolinone cluster 1 (FDB1) involved in the degradation of benzoxazolinones produced by the host plant. Maize, wheat, and rye produce the 2 benzoxazinone phytoanticipins 2,4-dihy-droxy-7-methoxy-1,4-benzoxazin-3-one (DIMBOA) and 2,4-dihydroxy-1,4-benzoxazin-3-one (DIBOA) that, due to their inherent instability once released, spontaneously degrade to the more stable corresponding benzoxazolinones, 6-methoxy-2-benzoxazolinone (MBOA) and 2-benzoxazolinone (BOA), respectively. The first step in the detoxification of benzoxazolinones involves the hydrolysis of the cyclic ester bond of benzoxazolinones by the FDB1 cluster gamma-lactamase MBL1 to aminophenols. MBL1 is able to convert BOA into 2-aminophenol (2-AP), as well as MBOA into 5-methoxy-2-aminophenol (2-AMP). The FDB2 cluster N-malonyltransferase FDB2/NAT1 then metabolizes aminophenols via N-malonylation to non-toxic malonamic acids. FDB2/NAT1 converts 2-AP into N-(2-hydroxyphenyl) malonamic acid (HPMA) and 2-AMP into N-(2-hydroxy-4-methoxyphenyl) malonamic acid (HMPMA). The duplicated dienlactone hydrolases DLH1 and DLH2 may provide redundant function for hydrolyzing the lactone moiety in the BOA molecule. The roles of the amidases an other enzymes encoded by the 2 FDB clusters have not been identified so far. The chain is FAD-dependent monooxygenase FVEG_08293 from Gibberella moniliformis (strain M3125 / FGSC 7600) (Maize ear and stalk rot fungus).